The chain runs to 333 residues: Ig gamma-2B chain C region (333 aa).

Ig-like domains are found at residues P6–E96, P124–S223, and P232–S328. Disulfide bonds link C27–C80, C147–C207, and C253–C311.

This Rattus norvegicus (Rat) protein is Ig gamma-2B chain C region (Igh-1a).